We begin with the raw amino-acid sequence, 60 residues long: Large ribosomal subunit protein bL32 (60 aa).

Over residues 1–23 (MAKHPVPKKKTSKSKRDMRRSHH) the composition is skewed to basic residues. The tract at residues 1 to 34 (MAKHPVPKKKTSKSKRDMRRSHHALTAPNLTECP) is disordered. 4 residues coordinate Zn(2+): cysteine 33, cysteine 36, cysteine 46, and cysteine 49. The C4-type zinc finger occupies 33–49 (CPQCHGKKLSHHICPNC).

This sequence belongs to the bacterial ribosomal protein bL32 family. Part of the 50S ribosomal subunit. Contacts proteins L17 and L22. Zn(2+) serves as cofactor.

In terms of biological role, forms a cluster with L17 and L22, and with L22, a pair of 'tweezers' that hold together all the domains of the 23S rRNA. Interacts with the antibiotic troleandomycin which blocks the peptide exit tunnel. The polypeptide is Large ribosomal subunit protein bL32 (rpmF) (Deinococcus radiodurans (strain ATCC 13939 / DSM 20539 / JCM 16871 / CCUG 27074 / LMG 4051 / NBRC 15346 / NCIMB 9279 / VKM B-1422 / R1)).